Reading from the N-terminus, the 353-residue chain is Uroporphyrinogen decarboxylase (353 aa).

Residues 26-30 (RQAGR), D76, Y153, T208, and H326 contribute to the substrate site.

The protein belongs to the uroporphyrinogen decarboxylase family. As to quaternary structure, homodimer.

Its subcellular location is the cytoplasm. The enzyme catalyses uroporphyrinogen III + 4 H(+) = coproporphyrinogen III + 4 CO2. It participates in porphyrin-containing compound metabolism; protoporphyrin-IX biosynthesis; coproporphyrinogen-III from 5-aminolevulinate: step 4/4. In terms of biological role, catalyzes the decarboxylation of four acetate groups of uroporphyrinogen-III to yield coproporphyrinogen-III. In Chromohalobacter salexigens (strain ATCC BAA-138 / DSM 3043 / CIP 106854 / NCIMB 13768 / 1H11), this protein is Uroporphyrinogen decarboxylase.